A 300-amino-acid chain; its full sequence is 4-hydroxy-tetrahydrodipicolinate synthase (300 aa).

A pyruvate-binding site is contributed by T45. Y140 acts as the Proton donor/acceptor in catalysis. The active-site Schiff-base intermediate with substrate is the K169. Residue I210 participates in pyruvate binding.

The protein belongs to the DapA family. Homotetramer; dimer of dimers.

The protein resides in the cytoplasm. It carries out the reaction L-aspartate 4-semialdehyde + pyruvate = (2S,4S)-4-hydroxy-2,3,4,5-tetrahydrodipicolinate + H2O + H(+). It functions in the pathway amino-acid biosynthesis; L-lysine biosynthesis via DAP pathway; (S)-tetrahydrodipicolinate from L-aspartate: step 3/4. In terms of biological role, catalyzes the condensation of (S)-aspartate-beta-semialdehyde [(S)-ASA] and pyruvate to 4-hydroxy-tetrahydrodipicolinate (HTPA). The protein is 4-hydroxy-tetrahydrodipicolinate synthase of Helicobacter pylori (strain J99 / ATCC 700824) (Campylobacter pylori J99).